A 258-amino-acid chain; its full sequence is Acyl-[acyl-carrier-protein]--UDP-N-acetylglucosamine O-acyltransferase (258 aa).

Belongs to the transferase hexapeptide repeat family. LpxA subfamily. In terms of assembly, homotrimer.

The protein resides in the cytoplasm. It catalyses the reaction a (3R)-hydroxyacyl-[ACP] + UDP-N-acetyl-alpha-D-glucosamine = a UDP-3-O-[(3R)-3-hydroxyacyl]-N-acetyl-alpha-D-glucosamine + holo-[ACP]. The protein operates within glycolipid biosynthesis; lipid IV(A) biosynthesis; lipid IV(A) from (3R)-3-hydroxytetradecanoyl-[acyl-carrier-protein] and UDP-N-acetyl-alpha-D-glucosamine: step 1/6. In terms of biological role, involved in the biosynthesis of lipid A, a phosphorylated glycolipid that anchors the lipopolysaccharide to the outer membrane of the cell. This Alkalilimnicola ehrlichii (strain ATCC BAA-1101 / DSM 17681 / MLHE-1) protein is Acyl-[acyl-carrier-protein]--UDP-N-acetylglucosamine O-acyltransferase.